The following is a 518-amino-acid chain: GMP synthase [glutamine-hydrolyzing] (518 aa).

The Glutamine amidotransferase type-1 domain occupies 6-200; the sequence is RLLIIDFGSQ…FVRLAGFKGD (195 aa). The active-site Nucleophile is the cysteine 84. Catalysis depends on residues histidine 175 and glutamate 177. Residues 201-393 enclose the GMPS ATP-PPase domain; that stretch reads WTMGAYREEA…LGLPESFIGR (193 aa). 228–234 lines the ATP pocket; that stretch reads SGGVDSS.

As to quaternary structure, homodimer.

The enzyme catalyses XMP + L-glutamine + ATP + H2O = GMP + L-glutamate + AMP + diphosphate + 2 H(+). Its pathway is purine metabolism; GMP biosynthesis; GMP from XMP (L-Gln route): step 1/1. In terms of biological role, catalyzes the synthesis of GMP from XMP. The sequence is that of GMP synthase [glutamine-hydrolyzing] from Cereibacter sphaeroides (strain ATCC 17029 / ATH 2.4.9) (Rhodobacter sphaeroides).